The following is a 337-amino-acid chain: Anthranilate phosphoribosyltransferase (337 aa).

5-phospho-alpha-D-ribose 1-diphosphate-binding positions include G81, 84–85, S89, 91–94, 109–117, and A121; these read GD, NVST, and KHGNRALSS. Residue G81 participates in anthranilate binding. S93 is a Mg(2+) binding site. N112 lines the anthranilate pocket. R167 contacts anthranilate. Positions 226 and 227 each coordinate Mg(2+).

It belongs to the anthranilate phosphoribosyltransferase family. In terms of assembly, homodimer. It depends on Mg(2+) as a cofactor.

It catalyses the reaction N-(5-phospho-beta-D-ribosyl)anthranilate + diphosphate = 5-phospho-alpha-D-ribose 1-diphosphate + anthranilate. It functions in the pathway amino-acid biosynthesis; L-tryptophan biosynthesis; L-tryptophan from chorismate: step 2/5. Its function is as follows. Catalyzes the transfer of the phosphoribosyl group of 5-phosphorylribose-1-pyrophosphate (PRPP) to anthranilate to yield N-(5'-phosphoribosyl)-anthranilate (PRA). The protein is Anthranilate phosphoribosyltransferase of Bradyrhizobium sp. (strain BTAi1 / ATCC BAA-1182).